We begin with the raw amino-acid sequence, 554 residues long: Protein PNS1 (554 aa).

Low complexity-rich tracts occupy residues 1-19 and 27-45; these read MSGP…NNNN and SYQM…QPQY. Residues 1-90 form a disordered region; sequence MSGPQYGAQP…TDGYGGPPPS (90 aa). Over 1–105 the chain is Cytoplasmic; that stretch reads MSGPQYGAQP…KVQKPKYNDW (105 aa). The segment covering 68 to 90 has biased composition (pro residues); that stretch reads PQGPPPNGSKPPPTDGYGGPPPS. The chain crosses the membrane as a helical span at residues 106 to 126; sequence WAGLLFLATVAGFVAVSAISI. At 127–153 the chain is on the extracellular side; sequence HGYADNRSQNNGSLNGQRNTFGLTTHT. N-linked (GlcNAc...) asparagine glycans are attached at residues N132 and N137. Residues 154–174 traverse the membrane as a helical segment; that stretch reads IYLFVWVLICAIVLSYAYMWM. The Cytoplasmic segment spans residues 175–181; the sequence is ARKFTKQ. Residues 182 to 202 traverse the membrane as a helical segment; it reads FIYATGILNIVMGLVTALYML. Over 203-206 the chain is Extracellular; that stretch reads SRKY. A helical membrane pass occupies residues 207 to 227; sequence WSGGIVFLIFVVLQALFFWSC. Topologically, residues 228 to 255 are cytoplasmic; that stretch reads RSRIPFSTLMLQTAIDVSKVHGHVYLVS. Residues 256 to 276 traverse the membrane as a helical segment; the sequence is AVGGVIGTLFAAYWAITLVAV. At 277–297 the chain is on the extracellular side; it reads YVKFEPDPNNAACRNAGGCSS. The chain crosses the membrane as a helical span at residues 298–318; it reads GKVIGLIVFITFAGYWISEWL. The Cytoplasmic portion of the chain corresponds to 319–352; the sequence is KNTIHTTVAGIYGSWYFNSRNYPTKVTRGALKRS. The chain crosses the membrane as a helical span at residues 353–373; sequence LTYSFGSISLGSLFIAIINLI. Residues 374–389 lie on the Extracellular side of the membrane; sequence RQLAQAAQQNAAQEGD. Residues 390–410 traverse the membrane as a helical segment; sequence ILGTILWCIFGCLIGILDWLV. The Cytoplasmic portion of the chain corresponds to 411–451; that stretch reads EFINRYAFCHIALYGKAYFAAAKDTWKMVKDRGIDALINEC. Residues 452 to 472 traverse the membrane as a helical segment; it reads LIGPVLTFGATFVAYACGLIA. Residues 473–487 are Extracellular-facing; the sequence is YLYMVYTKPAYNDGG. Residues 488 to 508 traverse the membrane as a helical segment; sequence GFTPVVVAFAFLIGLQVCNVF. The Cytoplasmic portion of the chain corresponds to 509–554; the sequence is TTPLTSGIDTIFVAMAWDPEVLMRDHPDLYHRMVQVYPHVQEAIHA.

It belongs to the CTL (choline transporter-like) family.

It localises to the cell membrane. Probably involved in transport through the plasma membrane. This is Protein PNS1 (pns-1) from Neurospora crassa (strain ATCC 24698 / 74-OR23-1A / CBS 708.71 / DSM 1257 / FGSC 987).